A 312-amino-acid polypeptide reads, in one-letter code: Ribosomal RNA small subunit methyltransferase H (312 aa).

S-adenosyl-L-methionine-binding positions include 32–34 (AGH), Asp52, Phe79, Asp100, and Gln107.

This sequence belongs to the methyltransferase superfamily. RsmH family.

The protein localises to the cytoplasm. The enzyme catalyses cytidine(1402) in 16S rRNA + S-adenosyl-L-methionine = N(4)-methylcytidine(1402) in 16S rRNA + S-adenosyl-L-homocysteine + H(+). Its function is as follows. Specifically methylates the N4 position of cytidine in position 1402 (C1402) of 16S rRNA. In Listeria monocytogenes serotype 4b (strain CLIP80459), this protein is Ribosomal RNA small subunit methyltransferase H.